A 493-amino-acid polypeptide reads, in one-letter code: MSEVRTRIAPSPTGDPHVGTAYIALFNMAFARKMGGKFILRIEDTDQTRSTPESEKMILDALRWLGLDWAEGPDVGGPYGPYRQSERGDIYGQYAQELIDKGHAFYAFETTEELDQMRNEQKEQGLPQKYDGRALNLTAEEVQAKLDAGVPYVIRMKIPEEGTCVVQDMLRGTIEIDWAQVDMQVLLKADGMPTYHLANVVDDHLMKITHVIRGEEWINSAPKHILLYQYFGWDMPTLCHMPLLRNPDKSKLSKRKNPTSILYYQRMGYMSEAVINYLGRMGWSMPDEREKFSLDEMIEHFDIQRVSLGGPVFDVEKLSWLNGMWIRENLTPETFAQKYVEWALNPEYLMKILPLVIPRVETFSDVADVAGFFLKGMLPITKEDFSSIKLEEETLRKAMQFALWRLEALSKWEKDEIFNEMKALAQVMEIKPKDFFAPLFVAISGTTASVSVFDSMAILGSDISRARMRTAVNVLGGPSKKEAKRWEKEYADL.

The 'HIGH' region motif lies at P10–T20. The short motif at K251–R255 is the 'KMSKS' region element. Residue K254 participates in ATP binding.

Belongs to the class-I aminoacyl-tRNA synthetase family. Glutamate--tRNA ligase type 1 subfamily. As to quaternary structure, monomer.

It localises to the cytoplasm. The enzyme catalyses tRNA(Glu) + L-glutamate + ATP = L-glutamyl-tRNA(Glu) + AMP + diphosphate. Catalyzes the attachment of glutamate to tRNA(Glu) in a two-step reaction: glutamate is first activated by ATP to form Glu-AMP and then transferred to the acceptor end of tRNA(Glu). The sequence is that of Glutamate--tRNA ligase from Marinomonas sp. (strain MWYL1).